Here is a 427-residue protein sequence, read N- to C-terminus: Glutamyl-tRNA reductase (427 aa).

Residues 49–52 (TCNR), serine 105, 110–112 (EPQ), and glutamine 116 each bind substrate. The active-site Nucleophile is the cysteine 50. An NADP(+)-binding site is contributed by 185 to 190 (AAGEMN).

Belongs to the glutamyl-tRNA reductase family. As to quaternary structure, homodimer.

It catalyses the reaction (S)-4-amino-5-oxopentanoate + tRNA(Glu) + NADP(+) = L-glutamyl-tRNA(Glu) + NADPH + H(+). Its pathway is porphyrin-containing compound metabolism; protoporphyrin-IX biosynthesis; 5-aminolevulinate from L-glutamyl-tRNA(Glu): step 1/2. In terms of biological role, catalyzes the NADPH-dependent reduction of glutamyl-tRNA(Glu) to glutamate 1-semialdehyde (GSA). This chain is Glutamyl-tRNA reductase, found in Acinetobacter baumannii (strain AB307-0294).